The primary structure comprises 195 residues: Protein GrpE (195 aa).

A compositionally biased stretch (polar residues) spans 1-24; that stretch reads MSSKEQNTPDEQVSQESEMEQGQQ. The interval 1–40 is disordered; that stretch reads MSSKEQNTPDEQVSQESEMEQGQQAEAAPETVDVVDPRDE.

Belongs to the GrpE family. As to quaternary structure, homodimer.

The protein localises to the cytoplasm. In terms of biological role, participates actively in the response to hyperosmotic and heat shock by preventing the aggregation of stress-denatured proteins, in association with DnaK and GrpE. It is the nucleotide exchange factor for DnaK and may function as a thermosensor. Unfolded proteins bind initially to DnaJ; upon interaction with the DnaJ-bound protein, DnaK hydrolyzes its bound ATP, resulting in the formation of a stable complex. GrpE releases ADP from DnaK; ATP binding to DnaK triggers the release of the substrate protein, thus completing the reaction cycle. Several rounds of ATP-dependent interactions between DnaJ, DnaK and GrpE are required for fully efficient folding. The polypeptide is Protein GrpE (Sodalis glossinidius (strain morsitans)).